Consider the following 168-residue polypeptide: Ribosome maturation factor RimP (168 aa).

It belongs to the RimP family.

Its subcellular location is the cytoplasm. Required for maturation of 30S ribosomal subunits. The chain is Ribosome maturation factor RimP from Syntrophobacter fumaroxidans (strain DSM 10017 / MPOB).